The chain runs to 40 residues: Potassium channel toxin alpha-KTx 12.3 (40 aa).

Cystine bridges form between Cys2–Cys5, Cys10–Cys31, Cys16–Cys36, and Cys20–Cys38.

As to expression, expressed by the venom gland.

The protein resides in the secreted. Inhibits high conductance calcium-activated potassium channels (KCNMA). Inhibits Shaker B potassium channels. The sequence is that of Potassium channel toxin alpha-KTx 12.3 from Tityus costatus (Brazilian scorpion).